The chain runs to 173 residues: Crossover junction endodeoxyribonuclease RuvC (173 aa).

Residues D8, E67, and D139 contribute to the active site. Mg(2+) contacts are provided by D8, E67, and D139.

The protein belongs to the RuvC family. As to quaternary structure, homodimer which binds Holliday junction (HJ) DNA. The HJ becomes 2-fold symmetrical on binding to RuvC with unstacked arms; it has a different conformation from HJ DNA in complex with RuvA. In the full resolvosome a probable DNA-RuvA(4)-RuvB(12)-RuvC(2) complex forms which resolves the HJ. Mg(2+) serves as cofactor.

The protein resides in the cytoplasm. It carries out the reaction Endonucleolytic cleavage at a junction such as a reciprocal single-stranded crossover between two homologous DNA duplexes (Holliday junction).. The RuvA-RuvB-RuvC complex processes Holliday junction (HJ) DNA during genetic recombination and DNA repair. Endonuclease that resolves HJ intermediates. Cleaves cruciform DNA by making single-stranded nicks across the HJ at symmetrical positions within the homologous arms, yielding a 5'-phosphate and a 3'-hydroxyl group; requires a central core of homology in the junction. The consensus cleavage sequence is 5'-(A/T)TT(C/G)-3'. Cleavage occurs on the 3'-side of the TT dinucleotide at the point of strand exchange. HJ branch migration catalyzed by RuvA-RuvB allows RuvC to scan DNA until it finds its consensus sequence, where it cleaves and resolves the cruciform DNA. The sequence is that of Crossover junction endodeoxyribonuclease RuvC from Shewanella amazonensis (strain ATCC BAA-1098 / SB2B).